Reading from the N-terminus, the 406-residue chain is Elongation factor Tu-B (406 aa).

The tr-type G domain occupies 10 to 215 (KPHVNVGTIG…AIDEYIPTPV (206 aa)). The G1 stretch occupies residues 19–26 (GHVDHGKT). 19–26 (GHVDHGKT) lines the GTP pocket. A Mg(2+)-binding site is contributed by Thr26. Residues 61–65 (GITIN) are G2. Positions 82 to 85 (DCPG) are G3. GTP is bound by residues 82–86 (DCPGH) and 137–140 (NKVD). Residues 137–140 (NKVD) form a G4 region. The G5 stretch occupies residues 175–177 (SAL). Thr395 is subject to Phosphothreonine.

It belongs to the TRAFAC class translation factor GTPase superfamily. Classic translation factor GTPase family. EF-Tu/EF-1A subfamily. As to quaternary structure, monomer. Phosphorylated on a threonine.

It is found in the cytoplasm. It catalyses the reaction GTP + H2O = GDP + phosphate + H(+). GTP hydrolase that promotes the GTP-dependent binding of aminoacyl-tRNA to the A-site of ribosomes during protein biosynthesis. Functionally, protects glycyl-tRNA(Gly) from hydrolysis by E.coli D-aminoacyl-tRNA deacylase (dtd). In Thermus thermophilus (strain ATCC 27634 / DSM 579 / HB8), this protein is Elongation factor Tu-B.